The primary structure comprises 356 residues: Cyanide hydratase (356 aa).

Residues 8 to 287 form the CN hydrolase domain; that stretch reads YKAAAVNAEP…EGLLFVDIDL (280 aa). Glu-48 acts as the Proton acceptor in catalysis. Lys-130 is a catalytic residue. Cys-165 (nucleophile) is an active-site residue.

Belongs to the carbon-nitrogen hydrolase superfamily. Nitrilase family. In terms of assembly, oligomer of dimers, forming left-handed helical fibers.

It carries out the reaction formamide = hydrogen cyanide + H2O. Its function is as follows. Catalyzes the hydration of cyanide to formamide. Degradation of cyanide may be important for plant pathogenic fungi in infection of cyanogenic plants. Can also transform some nitriles like 2-cyanopyridine and fumaronitrile. The chain is Cyanide hydratase from Aspergillus niger.